The following is a 442-amino-acid chain: Histidine--tRNA ligase (442 aa).

The tract at residues 416-442 (SGDETTVPVEEFPPEGGEELPTYEDYE) is disordered. Positions 427–442 (FPPEGGEELPTYEDYE) are enriched in acidic residues.

It belongs to the class-II aminoacyl-tRNA synthetase family.

The protein localises to the cytoplasm. It carries out the reaction tRNA(His) + L-histidine + ATP = L-histidyl-tRNA(His) + AMP + diphosphate + H(+). In Halorubrum lacusprofundi (strain ATCC 49239 / DSM 5036 / JCM 8891 / ACAM 34), this protein is Histidine--tRNA ligase.